A 503-amino-acid polypeptide reads, in one-letter code: Hemogen (503 aa).

Basic residues-rich tracts occupy residues 1 to 10 and 61 to 79; these read MDMGKGRPRL and KKRK…RKRQ. The segment at 1 to 129 is disordered; that stretch reads MDMGKGRPRL…PLVPSPTKAV (129 aa). Residues 7 to 87 are necessary for nuclear localization; that stretch reads RPRLKLPQMP…RQGNVEQKAE (81 aa). Phosphoserine is present on residues serine 90, serine 103, serine 124, serine 153, serine 158, serine 171, serine 213, serine 223, serine 228, serine 241, and serine 269. Residue threonine 286 is modified to Phosphothreonine. Residues 381-503 form a disordered region; it reads QKTIQESPEP…ENGIYSSALF (123 aa). Low complexity predominate over residues 385–396; it reads QESPEPEQYSPE. Phosphoserine is present on residues serine 387 and serine 394. Positions 426-436 are enriched in basic and acidic residues; that stretch reads CQDREEPKHSL.

As to expression, expressed in hematopoietic precursor cells. Highly expressed in bone marrow, the red pulp of the spleen and round spermatids. Weakly expressed in peripheral blood cells.

The protein resides in the nucleus. Regulates the proliferation and differentiation of hematopoietic cells. Overexpression block the TPA-induced megakaryocytic differentiation in the K562 cell model. May also prevent cell apoptosis through the activation of the nuclear factor-kappa B (NF-kB). This is Hemogen (Hemgn) from Mus musculus (Mouse).